The chain runs to 93 residues: Molybdopterin synthase sulfur carrier subunit (93 aa).

Gly93 is modified (1-thioglycine; alternate). A Glycyl adenylate; alternate modification is found at Gly93.

Belongs to the MoaD family. MOCS2A subfamily. In terms of assembly, heterotetramer; composed of 2 small (MOCS2A) and 2 large (MOCS2B) subunits. C-terminal thiocarboxylation occurs in 2 steps, it is first acyl-adenylated (-COAMP) via the hesA/moeB/thiF part of uba4, then thiocarboxylated (-COSH) via the rhodanese domain of uba4.

Its subcellular location is the cytoplasm. Its pathway is cofactor biosynthesis; molybdopterin biosynthesis. In terms of biological role, acts as a sulfur carrier required for molybdopterin biosynthesis. Component of the molybdopterin synthase complex that catalyzes the conversion of precursor Z into molybdopterin by mediating the incorporation of 2 sulfur atoms into precursor Z to generate a dithiolene group. In the complex, serves as sulfur donor by being thiocarboxylated (-COSH) at its C-terminus by uba4. After interaction with MOCS2B, the sulfur is then transferred to precursor Z to form molybdopterin. This chain is Molybdopterin synthase sulfur carrier subunit, found in Pyrenophora tritici-repentis (strain Pt-1C-BFP) (Wheat tan spot fungus).